A 168-amino-acid chain; its full sequence is Ubiquitin-fold modifier-conjugating enzyme 1 (168 aa).

Catalysis depends on Cys116, which acts as the Glycyl thioester intermediate.

This sequence belongs to the ubiquitin-conjugating enzyme family. UFC1 subfamily.

In terms of biological role, E2-like enzyme which forms an intermediate with UFM1 via a thioester linkage. The protein is Ubiquitin-fold modifier-conjugating enzyme 1 of Trichoplax adhaerens (Trichoplax reptans).